Consider the following 77-residue polypeptide: uncharacterized protein (77 aa).

Residues 1–15 (MNRTSESVEPQQNEK) are compositionally biased toward polar residues. Disordered stretches follow at residues 1 to 20 (MNRTSESVEPQQNEKTAVHW) and 31 to 52 (TYSNEDDEDNEEGDESRPQRTF). The span at 33 to 44 (SNEDDEDNEEGD) shows a compositional bias: acidic residues.

This is an uncharacterized protein from Schizosaccharomyces pombe (strain 972 / ATCC 24843) (Fission yeast).